A 311-amino-acid polypeptide reads, in one-letter code: Transcription factor BIM2 (311 aa).

Disordered regions lie at residues 1–60 and 271–311; these read MRTG…RRSK and ANQG…MKTL. Basic and acidic residues-rich tracts occupy residues 33–44 and 51–60; these read SNRDSKENDKAS and SVTEQRRRSK. The region spanning 45–95 is the bHLH domain; the sequence is AIRSKHSVTEQRRRSKINERFQILRELIPNSEQKRDTASFLLEVIDYVQYL.

Homodimer. Interacts with the N-terminus of BZR2/BES1. Expressed constitutively in roots, leaves, stems, and flowers.

The protein resides in the nucleus. Functionally, positive brassinosteroid-signaling protein. The polypeptide is Transcription factor BIM2 (BIM2) (Arabidopsis thaliana (Mouse-ear cress)).